Reading from the N-terminus, the 388-residue chain is Succinate--CoA ligase [ADP-forming] subunit beta (388 aa).

The region spanning 9 to 244 is the ATP-grasp domain; that stretch reads KQLFAEFGLP…PSQEDEREAH (236 aa). ATP is bound by residues K46, 53-55, E99, S102, and E107; that span reads GRG. The Mg(2+) site is built by N199 and D213. Residues N264 and 321–323 contribute to the substrate site; that span reads GIV.

It belongs to the succinate/malate CoA ligase beta subunit family. Heterotetramer of two alpha and two beta subunits. Requires Mg(2+) as cofactor.

It catalyses the reaction succinate + ATP + CoA = succinyl-CoA + ADP + phosphate. The catalysed reaction is GTP + succinate + CoA = succinyl-CoA + GDP + phosphate. Its pathway is carbohydrate metabolism; tricarboxylic acid cycle; succinate from succinyl-CoA (ligase route): step 1/1. In terms of biological role, succinyl-CoA synthetase functions in the citric acid cycle (TCA), coupling the hydrolysis of succinyl-CoA to the synthesis of either ATP or GTP and thus represents the only step of substrate-level phosphorylation in the TCA. The beta subunit provides nucleotide specificity of the enzyme and binds the substrate succinate, while the binding sites for coenzyme A and phosphate are found in the alpha subunit. This is Succinate--CoA ligase [ADP-forming] subunit beta from Vibrio parahaemolyticus serotype O3:K6 (strain RIMD 2210633).